Here is a 24-residue protein sequence, read N- to C-terminus: Neurotoxin 5 (24 aa).

An LCN-type CS-alpha/beta domain is found at 2–24; it reads RDAYIAQNYNCVYTCFKNDYCND.

This sequence belongs to the long (4 C-C) scorpion toxin superfamily. Sodium channel inhibitor family. Alpha subfamily. Expressed by the venom gland.

The protein resides in the secreted. Functionally, binds to sodium channels (Nav) and inhibits the inactivation of the activated channels, thereby blocking neuronal transmission. The sequence is that of Neurotoxin 5 from Buthus occitanus tunetanus (Common European scorpion).